Consider the following 273-residue polypeptide: Large ribosomal subunit protein uL2 (273 aa).

Disordered stretches follow at residues 28–53 (KPFA…TTRH) and 221–273 (RGTA…RRTK). Positions 39–48 (KSGGRNNNGR) are enriched in low complexity.

This sequence belongs to the universal ribosomal protein uL2 family. In terms of assembly, part of the 50S ribosomal subunit. Forms a bridge to the 30S subunit in the 70S ribosome.

One of the primary rRNA binding proteins. Required for association of the 30S and 50S subunits to form the 70S ribosome, for tRNA binding and peptide bond formation. It has been suggested to have peptidyltransferase activity; this is somewhat controversial. Makes several contacts with the 16S rRNA in the 70S ribosome. This Pectobacterium atrosepticum (strain SCRI 1043 / ATCC BAA-672) (Erwinia carotovora subsp. atroseptica) protein is Large ribosomal subunit protein uL2.